A 162-amino-acid chain; its full sequence is uncharacterized protein (162 aa).

Residues 1-21 (MRLCGLLIFLSYIVYVDNAVT) form the signal peptide.

This is an uncharacterized protein from Caenorhabditis elegans.